The sequence spans 487 residues: Cobyric acid synthase (487 aa).

The GATase cobBQ-type domain maps to 249–435 (GIDIAIVRLP…IHGIFDEGDF (187 aa)). The active-site Nucleophile is C330. The active site involves H427.

This sequence belongs to the CobB/CobQ family. CobQ subfamily.

Its pathway is cofactor biosynthesis; adenosylcobalamin biosynthesis. Its function is as follows. Catalyzes amidations at positions B, D, E, and G on adenosylcobyrinic A,C-diamide. NH(2) groups are provided by glutamine, and one molecule of ATP is hydrogenolyzed for each amidation. The protein is Cobyric acid synthase of Clostridium perfringens (strain SM101 / Type A).